Here is a 162-residue protein sequence, read N- to C-terminus: Peptide deformylase (162 aa).

Fe cation contacts are provided by cysteine 86 and histidine 128. Glutamate 129 is a catalytic residue. Position 132 (histidine 132) interacts with Fe cation.

The protein belongs to the polypeptide deformylase family. Fe(2+) serves as cofactor.

It catalyses the reaction N-terminal N-formyl-L-methionyl-[peptide] + H2O = N-terminal L-methionyl-[peptide] + formate. Removes the formyl group from the N-terminal Met of newly synthesized proteins. Requires at least a dipeptide for an efficient rate of reaction. N-terminal L-methionine is a prerequisite for activity but the enzyme has broad specificity at other positions. This chain is Peptide deformylase, found in Treponema pallidum (strain Nichols).